A 326-amino-acid polypeptide reads, in one-letter code: Acetyl-coenzyme A carboxylase carboxyl transferase subunit alpha (326 aa).

Residues 44 to 298 (KLETRAMQLR…KQALLDNLDE (255 aa)) enclose the CoA carboxyltransferase C-terminal domain.

It belongs to the AccA family. Acetyl-CoA carboxylase is a heterohexamer composed of biotin carboxyl carrier protein (AccB), biotin carboxylase (AccC) and two subunits each of ACCase subunit alpha (AccA) and ACCase subunit beta (AccD).

Its subcellular location is the cytoplasm. It carries out the reaction N(6)-carboxybiotinyl-L-lysyl-[protein] + acetyl-CoA = N(6)-biotinyl-L-lysyl-[protein] + malonyl-CoA. Its pathway is lipid metabolism; malonyl-CoA biosynthesis; malonyl-CoA from acetyl-CoA: step 1/1. Functionally, component of the acetyl coenzyme A carboxylase (ACC) complex. First, biotin carboxylase catalyzes the carboxylation of biotin on its carrier protein (BCCP) and then the CO(2) group is transferred by the carboxyltransferase to acetyl-CoA to form malonyl-CoA. The polypeptide is Acetyl-coenzyme A carboxylase carboxyl transferase subunit alpha (Trichormus variabilis (strain ATCC 29413 / PCC 7937) (Anabaena variabilis)).